We begin with the raw amino-acid sequence, 521 residues long: Outer membrane protein assembly factor BamB (521 aa).

Positions 1 to 19 (MKKLFLVIVPLLLSLLATS) are cleaved as a signal peptide. The N-palmitoyl cysteine moiety is linked to residue cysteine 20. The S-diacylglycerol cysteine moiety is linked to residue cysteine 20. The disordered stretch occupies residues 418 to 521 (KSGSIESSPK…IGDFSKGDSD (104 aa)). The segment covering 429-444 (LPDKKVDSNKTSKNDT) has biased composition (basic and acidic residues). Over residues 445-477 (DSNPATTATSTKDIQNPANQEMINSTPVSNTST) the composition is skewed to polar residues.

The protein belongs to the BamB family. In terms of assembly, part of the Bam complex.

The protein resides in the cell outer membrane. Functionally, part of the outer membrane protein assembly complex, which is involved in assembly and insertion of beta-barrel proteins into the outer membrane. The protein is Outer membrane protein assembly factor BamB of Francisella salina.